We begin with the raw amino-acid sequence, 156 residues long: ATP synthase subunit b (156 aa).

A helical transmembrane segment spans residues 11–31 (AIAFVLFVLFCMKYVWPPLMA).

The protein belongs to the ATPase B chain family. In terms of assembly, F-type ATPases have 2 components, F(1) - the catalytic core - and F(0) - the membrane proton channel. F(1) has five subunits: alpha(3), beta(3), gamma(1), delta(1), epsilon(1). F(0) has three main subunits: a(1), b(2) and c(10-14). The alpha and beta chains form an alternating ring which encloses part of the gamma chain. F(1) is attached to F(0) by a central stalk formed by the gamma and epsilon chains, while a peripheral stalk is formed by the delta and b chains.

It localises to the cell inner membrane. In terms of biological role, f(1)F(0) ATP synthase produces ATP from ADP in the presence of a proton or sodium gradient. F-type ATPases consist of two structural domains, F(1) containing the extramembraneous catalytic core and F(0) containing the membrane proton channel, linked together by a central stalk and a peripheral stalk. During catalysis, ATP synthesis in the catalytic domain of F(1) is coupled via a rotary mechanism of the central stalk subunits to proton translocation. Functionally, component of the F(0) channel, it forms part of the peripheral stalk, linking F(1) to F(0). The protein is ATP synthase subunit b of Shigella boydii serotype 18 (strain CDC 3083-94 / BS512).